Here is a 437-residue protein sequence, read N- to C-terminus: Elongator complex protein 4 (437 aa).

A disordered region spans residues 179–247 (FSKSSSPTTP…TKTGSQDSPL (69 aa)). Residues 181-192 (KSSSPTTPSLEQ) are compositionally biased toward polar residues. S183 carries the phosphoserine modification. Over residues 220–237 (SANNNNNNNNNSSSVTSS) the composition is skewed to low complexity. At S242 the chain carries Phosphoserine.

This sequence belongs to the ELP4 family. As to quaternary structure, component of the elongator complex composed of Elp1, Elp2, Elp3, Elp4, Elp5 and Elp6. The elongator complex associates with and stabilizes microtubules; efficient interaction requires the full complex.

The protein resides in the cytoplasm. Its subcellular location is the nucleus. It is found in the cytoskeleton. The protein localises to the spindle. The protein operates within tRNA modification; 5-methoxycarbonylmethyl-2-thiouridine-tRNA biosynthesis. Functionally, component of the elongator complex, which is required for multiple tRNA modifications, including mcm5U (5-methoxycarbonylmethyl uridine), mcm5s2U (5-methoxycarbonylmethyl-2-thiouridine), and ncm5U (5-carbamoylmethyl uridine). The elongator complex catalyzes the formation of carboxymethyluridine in the wobble base at position 34 in tRNAs. Binding by the elongator complex stabilizes microtubules and promotes their growth. This induces central spindle asymmetry, promoting polarized signaling endosome trafficking during asymmetric cell division and cell fate assignation of sensory organ precursor cells. The protein is Elongator complex protein 4 of Drosophila melanogaster (Fruit fly).